The chain runs to 227 residues: UPF0758 protein Dred_2549 (227 aa).

One can recognise an MPN domain in the interval 105-227; the sequence is IIRCPEDVCG…FTSLKSKGLI (123 aa). Residues histidine 176, histidine 178, and aspartate 189 each coordinate Zn(2+). Residues 176-189 carry the JAMM motif motif; it reads HNHPSGDPTPSRED.

The protein belongs to the UPF0758 family.

The protein is UPF0758 protein Dred_2549 of Desulforamulus reducens (strain ATCC BAA-1160 / DSM 100696 / MI-1) (Desulfotomaculum reducens).